The sequence spans 907 residues: Protein translocase subunit SecA (907 aa).

ATP is bound by residues Q87, 105 to 109, and D510; that span reads GEGKT. Zn(2+) contacts are provided by C892, C894, C903, and H904.

The protein belongs to the SecA family. As to quaternary structure, monomer and homodimer. Part of the essential Sec protein translocation apparatus which comprises SecA, SecYEG and auxiliary proteins SecDF-YajC and YidC. Requires Zn(2+) as cofactor.

It is found in the cell inner membrane. The protein localises to the cytoplasm. It catalyses the reaction ATP + H2O + cellular proteinSide 1 = ADP + phosphate + cellular proteinSide 2.. Its function is as follows. Part of the Sec protein translocase complex. Interacts with the SecYEG preprotein conducting channel. Has a central role in coupling the hydrolysis of ATP to the transfer of proteins into and across the cell membrane, serving both as a receptor for the preprotein-SecB complex and as an ATP-driven molecular motor driving the stepwise translocation of polypeptide chains across the membrane. The chain is Protein translocase subunit SecA from Acinetobacter baumannii (strain ATCC 17978 / DSM 105126 / CIP 53.77 / LMG 1025 / NCDC KC755 / 5377).